Reading from the N-terminus, the 332-residue chain is tRNA-dihydrouridine synthase B (332 aa).

Residues P16–A18 and Q70 each bind FMN. Catalysis depends on C100, which acts as the Proton donor. Residues K139, N200–D202, and G224–R225 each bind FMN.

The protein belongs to the Dus family. DusB subfamily. FMN is required as a cofactor.

It catalyses the reaction a 5,6-dihydrouridine in tRNA + NAD(+) = a uridine in tRNA + NADH + H(+). It carries out the reaction a 5,6-dihydrouridine in tRNA + NADP(+) = a uridine in tRNA + NADPH + H(+). Functionally, catalyzes the synthesis of 5,6-dihydrouridine (D), a modified base found in the D-loop of most tRNAs, via the reduction of the C5-C6 double bond in target uridines. In Xanthomonas campestris pv. campestris (strain ATCC 33913 / DSM 3586 / NCPPB 528 / LMG 568 / P 25), this protein is tRNA-dihydrouridine synthase B.